We begin with the raw amino-acid sequence, 426 residues long: Delta-aminolevulinic acid dehydratase, chloroplastic (426 aa).

The transit peptide at 1 to 45 (MASTVSFSPANVQMLQGRSCHGHAAFGGCSAVPRTGPRMRSVAVR) directs the protein to the chloroplast. The interval 74–107 (GRFPAPPPLVRPKAPEGTPQIRPLDLTKRPRRNR) is disordered. The active-site Schiff-base intermediate with substrate is K293. The 5-aminolevulinate site is built by R303 and K315. Residue E331 participates in Mg(2+) binding. The Schiff-base intermediate with substrate role is filled by K346. Residues S372 and Y411 each coordinate 5-aminolevulinate.

The protein belongs to the ALAD family. As to quaternary structure, homooctamer. Mg(2+) is required as a cofactor.

It is found in the plastid. The protein resides in the chloroplast. It carries out the reaction 2 5-aminolevulinate = porphobilinogen + 2 H2O + H(+). The protein operates within porphyrin-containing compound metabolism; protoporphyrin-IX biosynthesis; coproporphyrinogen-III from 5-aminolevulinate: step 1/4. Functionally, catalyzes an early step in the biosynthesis of tetrapyrroles. Binds two molecules of 5-aminolevulinate per subunit, each at a distinct site, and catalyzes their condensation to form porphobilinogen. This Oryza sativa subsp. japonica (Rice) protein is Delta-aminolevulinic acid dehydratase, chloroplastic (HEMB).